The following is a 162-amino-acid chain: Allophycocyanin subunit beta (162 aa).

The residue at position 72 (Asn-72) is an N4-methylasparagine. Cys-82 is a (2R,3E)-phycocyanobilin binding site.

It belongs to the phycobiliprotein family. Heterohexamer of two alpha chains, one alpha-B chain and three beta chains. Contains one covalently linked phycocyanobilin chromophore. The chromophore is added by phycocyanobilin lyase CpcS 1.

The protein resides in the cellular thylakoid membrane. Functionally, light-harvesting photosynthetic bile pigment-protein from the phycobiliprotein complex. Allophycocyanin has a maximum absorption at approximately 650 to 653 nanometers. This is Allophycocyanin subunit beta (apcB) from Nostoc sp. (strain PCC 7120 / SAG 25.82 / UTEX 2576).